Reading from the N-terminus, the 185-residue chain is Protein C2-DOMAIN ABA-RELATED 9 (185 aa).

In terms of domain architecture, C2 spans 1–104 (MEDKPLGILR…LEAHQMELDF (104 aa)). Residues arginine 22, aspartate 23, aspartate 28, aspartate 74, lysine 75, aspartate 76, and aspartate 82 each coordinate Ca(2+).

This sequence belongs to the plant CAR protein family. As to quaternary structure, binds to PYR/PYL/RCAR abscisic acid intracellular receptors in an ABA-independent manner, both at the plasma membrane and in the nucleus. Interacts with LOT1 in the nuleus; this interaction is repressed by abscisic acid (ABA) and is sensitive to calcium ion Ca(2+), leading to free CAR9 accumulation at the plasma membrane. The cofactor is Ca(2+).

The protein localises to the cell membrane. Its subcellular location is the nucleus. Stimulates the GTPase/ATPase activities of Obg-like ATPases. Mediates the transient calcium-dependent interaction of PYR/PYL/RCAR abscisic acid (ABA) receptors with the plasma membrane and thus regulates ABA sensitivity. The protein is Protein C2-DOMAIN ABA-RELATED 9 of Arabidopsis thaliana (Mouse-ear cress).